Here is a 244-residue protein sequence, read N- to C-terminus: 3-oxoacyl-[acyl-carrier-protein] reductase FabG (244 aa).

NADP(+) contacts are provided by residues 12–15 and Thr37; that span reads GASR. 2 residues coordinate Ca(2+): Gly50 and Gly53. Residues 59–60 and Asn86 each bind NADP(+); that span reads NV. Ser138 lines the substrate pocket. Asn145 contacts Ca(2+). Tyr151 serves as the catalytic Proton acceptor. Residues 151–155 and Ile184 contribute to the NADP(+) site; that span reads YAAAK. Residues Glu233 and Thr234 each coordinate Ca(2+).

It belongs to the short-chain dehydrogenases/reductases (SDR) family. Homotetramer.

It carries out the reaction a (3R)-hydroxyacyl-[ACP] + NADP(+) = a 3-oxoacyl-[ACP] + NADPH + H(+). It catalyses the reaction 3-oxobutanoyl-[ACP] + NADPH + H(+) = (3R)-hydroxybutanoyl-[ACP] + NADP(+). The enzyme catalyses 3-oxopentanoyl-[ACP] + NADPH + H(+) = (3R)-hydroxypentanoyl-[ACP] + NADP(+). The catalysed reaction is 3-oxohexanoyl-[ACP] + NADPH + H(+) = (3R)-hydroxyhexanoyl-[ACP] + NADP(+). It carries out the reaction 3-oxoheptanoyl-[ACP] + NADPH + H(+) = (3R)-hydroxyheptanoyl-[ACP] + NADP(+). It catalyses the reaction 3-oxooctanoyl-[ACP] + NADPH + H(+) = (3R)-hydroxyoctanoyl-[ACP] + NADP(+). The enzyme catalyses 3-oxononanoyl-[ACP] + NADPH + H(+) = (3R)-hydroxynonanoyl-[ACP] + NADP(+). The catalysed reaction is 3-oxodecanoyl-[ACP] + NADPH + H(+) = (3R)-hydroxydecanoyl-[ACP] + NADP(+). It carries out the reaction 3-oxohexadecanoyl-[ACP] + NADPH + H(+) = (3R)-hydroxyhexadecanoyl-[ACP] + NADP(+). It catalyses the reaction 3-oxo-(9Z)-hexadecenoyl-[ACP] + NADPH + H(+) = (3R)-hydroxy-(9Z)-hexadecenoyl-[ACP] + NADP(+). The enzyme catalyses 4-methyl-3-oxopentanoyl-[ACP] + NADPH + H(+) = (3R)-hydroxy-4-methylpentanoyl-[ACP] + NADP(+). The catalysed reaction is 5-methyl-3-oxohexanoyl-[ACP] + NADPH + H(+) = (3R)-hydroxy-5-methylhexanoyl-[ACP] + NADP(+). It carries out the reaction 4-methyl-3-oxohexanoyl-[ACP] + NADPH + H(+) = (3R)-hydroxy-4-methylhexanoyl-[ACP] + NADP(+). It participates in lipid metabolism; fatty acid biosynthesis. Its activity is regulated as follows. Inhibited by cinnamic acid derivatives. Catalyzes the NADPH-dependent reduction of beta-ketoacyl-ACP substrates to beta-hydroxyacyl-ACP products, the first reductive step in the elongation cycle of fatty acid biosynthesis. The protein is 3-oxoacyl-[acyl-carrier-protein] reductase FabG (fabG) of Escherichia coli (strain K12).